The primary structure comprises 516 residues: GMP synthase [glutamine-hydrolyzing] (516 aa).

The Glutamine amidotransferase type-1 domain occupies 8-198 (KILILDFGSQ…ALNICKCDAL (191 aa)). Cys84 (nucleophile) is an active-site residue. Catalysis depends on residues His172 and Glu174. The GMPS ATP-PPase domain maps to 199-391 (WNIENIIEND…LGLPYNMLYR (193 aa)). 226 to 232 (SGGVDSS) is an ATP binding site.

In terms of assembly, homodimer.

It carries out the reaction XMP + L-glutamine + ATP + H2O = GMP + L-glutamate + AMP + diphosphate + 2 H(+). Its pathway is purine metabolism; GMP biosynthesis; GMP from XMP (L-Gln route): step 1/1. In terms of biological role, catalyzes the synthesis of GMP from XMP. This Francisella philomiragia subsp. philomiragia (strain ATCC 25017 / CCUG 19701 / FSC 153 / O#319-036) protein is GMP synthase [glutamine-hydrolyzing].